The primary structure comprises 246 residues: Phycocyanobilin:ferredoxin oxidoreductase (246 aa).

The protein belongs to the HY2 family.

The enzyme catalyses (2R,3Z)-phycocyanobilin + 4 oxidized [2Fe-2S]-[ferredoxin] = biliverdin IXalpha + 4 reduced [2Fe-2S]-[ferredoxin] + 4 H(+). In terms of biological role, catalyzes the four-electron reduction of biliverdin IX-alpha (2-electron reduction at both the A and D rings); the reaction proceeds via an isolatable 2-electron intermediate, 181,182-dihydrobiliverdin. This is Phycocyanobilin:ferredoxin oxidoreductase from Synechococcus sp. (strain CC9902).